The primary structure comprises 748 residues: Catalase-peroxidase (748 aa).

Positions 1-16 (MSSDTSASRPPQPDTR) are enriched in polar residues. Residues 1–43 (MSSDTSASRPPQPDTRTASKSESENPAIPSPHPKSNAPLTNRD) are disordered. Residues 113-238 (WHAAGTYRIH…YGATTMGLIY (126 aa)) constitute a cross-link (tryptophyl-tyrosyl-methioninium (Trp-Tyr) (with M-264)). Catalysis depends on histidine 114, which acts as the Proton acceptor. The segment at residues 238–264 (YVNPEGPEGKPDPIAAAIDIRETFGRM) is a cross-link (tryptophyl-tyrosyl-methioninium (Tyr-Met) (with W-113)). Residue histidine 279 coordinates heme b.

Belongs to the peroxidase family. Peroxidase/catalase subfamily. In terms of assembly, homodimer or homotetramer. Heme b is required as a cofactor. In terms of processing, formation of the three residue Trp-Tyr-Met cross-link is important for the catalase, but not the peroxidase activity of the enzyme.

The enzyme catalyses H2O2 + AH2 = A + 2 H2O. It catalyses the reaction 2 H2O2 = O2 + 2 H2O. Bifunctional enzyme with both catalase and broad-spectrum peroxidase activity. This is Catalase-peroxidase from Mycolicibacterium paratuberculosis (strain ATCC BAA-968 / K-10) (Mycobacterium paratuberculosis).